The primary structure comprises 273 residues: LDMGHMVNAIAQIDEFVNLGANSIETDVSFDDSANPEYTYHGVPCDCGRTCTKWEYFNEFLKGLRKATTPGDSKYHEKLVLVVFDLKTSSLYDNQASDAGKKLAKSLLQNYWNNGNNGGRAYIVLSIPNLAHYKLITGFKETLTSEGHPELMDKVGYDFSGNDEIGDVAKTYKKAGVTGHVWQSDGITNCLLRGLDRVRKAVANRDSSNGYINKVYYWTVDKRATTRDALDAGVDGIMTNYPDVIADVLNESAYKAKFRIASYDDNPWETFKN.

Residue histidine 5 is part of the active site. Glutamate 25 and aspartate 27 together coordinate Mg(2+). The Nucleophile role is filled by histidine 41. 2 cysteine pairs are disulfide-bonded: cysteine 45-cysteine 51 and cysteine 47-cysteine 190. Aspartate 85 contacts Mg(2+). Residue asparagine 250 is glycosylated (N-linked (GlcNAc...) asparagine).

It belongs to the arthropod phospholipase D family. Class II subfamily. Mg(2+) is required as a cofactor. In terms of tissue distribution, expressed by the venom gland.

The protein localises to the secreted. The catalysed reaction is an N-(acyl)-sphingosylphosphocholine = an N-(acyl)-sphingosyl-1,3-cyclic phosphate + choline. It catalyses the reaction an N-(acyl)-sphingosylphosphoethanolamine = an N-(acyl)-sphingosyl-1,3-cyclic phosphate + ethanolamine. It carries out the reaction a 1-acyl-sn-glycero-3-phosphocholine = a 1-acyl-sn-glycero-2,3-cyclic phosphate + choline. The enzyme catalyses a 1-acyl-sn-glycero-3-phosphoethanolamine = a 1-acyl-sn-glycero-2,3-cyclic phosphate + ethanolamine. In terms of biological role, dermonecrotic toxins cleave the phosphodiester linkage between the phosphate and headgroup of certain phospholipids (sphingolipid and lysolipid substrates), forming an alcohol (often choline) and a cyclic phosphate. This toxin acts on sphingomyelin (SM). It may also act on ceramide phosphoethanolamine (CPE), lysophosphatidylcholine (LPC) and lysophosphatidylethanolamine (LPE), but not on lysophosphatidylserine (LPS), and lysophosphatidylglycerol (LPG). It acts by transphosphatidylation, releasing exclusively cyclic phosphate products as second products. Induces dermonecrosis, hemolysis, increased vascular permeability, edema, inflammatory response, and platelet aggregation. In Loxosceles deserta (Desert recluse spider), this protein is Dermonecrotic toxin LdSicTox-alphaIB1bii.